A 322-amino-acid polypeptide reads, in one-letter code: Putative pyruvyl transferase EpsO (322 aa).

The protein belongs to the polysaccharide pyruvyl transferase family.

Functionally, may be involved in the production of the exopolysaccharide (EPS) component of the extracellular matrix during biofilm formation. EPS is responsible for the adhesion of chains of cells into bundles. The polypeptide is Putative pyruvyl transferase EpsO (epsO) (Bacillus subtilis (strain 168)).